The chain runs to 42 residues: Large ribosomal subunit protein bL36 (42 aa).

The protein belongs to the bacterial ribosomal protein bL36 family.

This chain is Large ribosomal subunit protein bL36, found in Wolbachia pipientis subsp. Culex pipiens (strain wPip).